Reading from the N-terminus, the 458-residue chain is Monomethylamine methyltransferase MtmB1 (458 aa).

A non-standard amino acid (pyrrolysine) is located at residue Pyl202.

Belongs to the monomethylamine methyltransferase family.

The enzyme catalyses Co(I)-[methylamine-specific corrinoid protein] + methylamine + H(+) = methyl-Co(III)-[methylamine-specific corrinoid protein] + NH4(+). The protein operates within one-carbon metabolism; methanogenesis from methylamine. Its function is as follows. Catalyzes the transfer of the methyl group from monomethylamine to the corrinoid cofactor of MtmC. In Methanosarcina barkeri (strain Fusaro / DSM 804), this protein is Monomethylamine methyltransferase MtmB1 (mtmB1).